The primary structure comprises 171 residues: Ribosome maturation factor RimM (171 aa).

Residues 93-167 (DGVYYYKDIF…KVYVELMEGL (75 aa)) enclose the PRC barrel domain.

The protein belongs to the RimM family. As to quaternary structure, binds ribosomal protein uS19.

Its subcellular location is the cytoplasm. Its function is as follows. An accessory protein needed during the final step in the assembly of 30S ribosomal subunit, possibly for assembly of the head region. Essential for efficient processing of 16S rRNA. May be needed both before and after RbfA during the maturation of 16S rRNA. It has affinity for free ribosomal 30S subunits but not for 70S ribosomes. This is Ribosome maturation factor RimM from Lactobacillus helveticus (strain DPC 4571).